The following is a 133-amino-acid chain: Glycine cleavage system H protein (133 aa).

Residues 30-112 enclose the Lipoyl-binding domain; that stretch reads TITVGITHHA…YGAGWFFKIK (83 aa). At Lys71 the chain carries N6-lipoyllysine.

The protein belongs to the GcvH family. The glycine cleavage system is composed of four proteins: P, T, L and H. (R)-lipoate serves as cofactor.

Its function is as follows. The glycine cleavage system catalyzes the degradation of glycine. The H protein shuttles the methylamine group of glycine from the P protein to the T protein. The chain is Glycine cleavage system H protein from Neisseria gonorrhoeae (strain ATCC 700825 / FA 1090).